Reading from the N-terminus, the 499-residue chain is Beta-amylase (499 aa).

Positions 55, 95, and 103 each coordinate substrate. The Proton donor role is filled by Glu188. Positions 298, 303, and 345 each coordinate substrate. Catalysis depends on Glu383, which acts as the Proton acceptor. Residues 384-385 (NA) and Arg423 each bind substrate.

This sequence belongs to the glycosyl hydrolase 14 family. Homotetramer.

The catalysed reaction is Hydrolysis of (1-&gt;4)-alpha-D-glucosidic linkages in polysaccharides so as to remove successive maltose units from the non-reducing ends of the chains.. The chain is Beta-amylase (BMY1) from Ipomoea batatas (Sweet potato).